Consider the following 507-residue polypeptide: Maturase K (507 aa).

This sequence belongs to the intron maturase 2 family. MatK subfamily.

It is found in the plastid. It localises to the chloroplast. In terms of biological role, usually encoded in the trnK tRNA gene intron. Probably assists in splicing its own and other chloroplast group II introns. The sequence is that of Maturase K from Lens culinaris (Lentil).